A 1446-amino-acid polypeptide reads, in one-letter code: Major viral transcription factor ICP4 homolog (1446 aa).

Disordered regions lie at residues 25–59 (AEEE…GGLF), 73–493 (AAAG…PPAD), 801–987 (PGPA…HTPR), and 1385–1446 (THRP…LLLR). Positions 73-94 (AAAGATRPPRPPSAQQQQQPRR) are enriched in low complexity. The span at 101–112 (VLDDEDEEEDEP) shows a compositional bias: acidic residues. Low complexity-rich tracts occupy residues 166-189 (RSSP…APRR) and 216-241 (PAAV…PVSA). Residues 262 to 277 (REPLLDEPAAARRLDP) show a composition bias toward basic and acidic residues. Composition is skewed to low complexity over residues 284-306 (SPVS…ETVA) and 345-397 (GFSS…SSSS). Residues 415 to 426 (GPPPSPPAPAAA) are compositionally biased toward pro residues. Positions 427-442 (PRPSASSASSSAAASP) are enriched in low complexity. Pro residues predominate over residues 803-815 (PAEPAPGLPPLWP). The span at 827-877 (PAAAGAPSGLPGSGPSSPASTKSSSSTKSSSSTKSGLSGSSGYASSPAAGP) shows a compositional bias: low complexity. Basic residues predominate over residues 883–892 (RRKKKRRAPG). Residues 933 to 952 (LGLGPAPDPAPALLSSSSSS) are compositionally biased toward low complexity.

Belongs to the herpesviridae ICP4 family. In terms of processing, a long stretch of serine residues may be a major site of phosphorylation.

The protein localises to the host nucleus. Functionally, this IE protein is a multifunctional protein capable of migrating to the nucleus, binding to DNA, trans-activating other viral genes, and autoregulating its own synthesis. The chain is Major viral transcription factor ICP4 homolog (IE) from Suid herpesvirus 1 (strain Kaplan) (SuHV-1).